The following is a 475-amino-acid chain: Aspartyl/glutamyl-tRNA(Asn/Gln) amidotransferase subunit B (475 aa).

This sequence belongs to the GatB/GatE family. GatB subfamily. In terms of assembly, heterotrimer of A, B and C subunits.

The catalysed reaction is L-glutamyl-tRNA(Gln) + L-glutamine + ATP + H2O = L-glutaminyl-tRNA(Gln) + L-glutamate + ADP + phosphate + H(+). It carries out the reaction L-aspartyl-tRNA(Asn) + L-glutamine + ATP + H2O = L-asparaginyl-tRNA(Asn) + L-glutamate + ADP + phosphate + 2 H(+). Functionally, allows the formation of correctly charged Asn-tRNA(Asn) or Gln-tRNA(Gln) through the transamidation of misacylated Asp-tRNA(Asn) or Glu-tRNA(Gln) in organisms which lack either or both of asparaginyl-tRNA or glutaminyl-tRNA synthetases. The reaction takes place in the presence of glutamine and ATP through an activated phospho-Asp-tRNA(Asn) or phospho-Glu-tRNA(Gln). The polypeptide is Aspartyl/glutamyl-tRNA(Asn/Gln) amidotransferase subunit B (Thermoanaerobacter sp. (strain X514)).